A 394-amino-acid chain; its full sequence is Elongation factor Tu (394 aa).

Positions Lys-10–Arg-205 constitute a tr-type G domain. The interval Gly-19–Thr-26 is G1. Gly-19–Thr-26 lines the GTP pocket. Residue Thr-26 coordinates Mg(2+). The G2 stretch occupies residues Gly-60–Asn-64. The interval Asp-81–Gly-84 is G3. GTP-binding positions include Asp-81 to His-85 and Asn-136 to Asp-139. The segment at Asn-136–Asp-139 is G4. Residues Ser-174–Leu-176 are G5.

This sequence belongs to the TRAFAC class translation factor GTPase superfamily. Classic translation factor GTPase family. EF-Tu/EF-1A subfamily. As to quaternary structure, monomer.

It localises to the cytoplasm. It catalyses the reaction GTP + H2O = GDP + phosphate + H(+). In terms of biological role, GTP hydrolase that promotes the GTP-dependent binding of aminoacyl-tRNA to the A-site of ribosomes during protein biosynthesis. This is Elongation factor Tu from Bacteroides thetaiotaomicron (strain ATCC 29148 / DSM 2079 / JCM 5827 / CCUG 10774 / NCTC 10582 / VPI-5482 / E50).